Consider the following 884-residue polypeptide: Putative GTP diphosphokinase RSH1, chloroplastic (884 aa).

A chloroplast-targeting transit peptide spans 1 to 55; that stretch reads MTSASSMSVSVECVNICNLTKGDGNARSDCSALSCAWKAPRALTGFLASTAHPPV. Positions 172-279 constitute an HD domain; the sequence is FIIHPVAVAR…VKLADRLHNM (108 aa). The TGS domain maps to 563 to 626; that stretch reads LGSRVFVFTP…ENAEVVEIVT (64 aa). Residues 711–727 are compositionally biased toward polar residues; that stretch reads QSQDKSRDTTPAPQNGS. Residues 711–747 are disordered; sequence QSQDKSRDTTPAPQNGSVWAPKVNGKHNKAIKNSSSD. An ACT domain is found at 797 to 868; sequence WLCVVSMDRK…LVLGVLGWSS (72 aa).

The protein belongs to the RelA/SpoT family. In terms of assembly, interacts with RPP4. Interacts with RPP5. Expressed in hypocotyls, shoots, cotyledons, rosette leaves, sepals and pistils.

It localises to the plastid. It is found in the chloroplast. The enzyme catalyses GTP + ATP = guanosine 3'-diphosphate 5'-triphosphate + AMP. May be involved in a rapid plant ppGpp (guanosine 3'-diphosphate 5'-diphosphate)-mediated response to pathogens and other stresses. Unable to functionally complement E.coli relA mutants. The protein is Putative GTP diphosphokinase RSH1, chloroplastic (RSH1) of Arabidopsis thaliana (Mouse-ear cress).